The chain runs to 703 residues: Metastasis-associated protein MTA1 (703 aa).

A BAH domain is found at 1–164; the sequence is MAANMYRVGD…PQQKTLLADK (164 aa). One can recognise an ELM2 domain in the interval 165-276; that stretch reads GEIRVGNRYQ…KAISALVPQG (112 aa). Residue Lys182 forms a Glycyl lysine isopeptide (Lys-Gly) (interchain with G-Cter in ubiquitin) linkage. The SANT domain occupies 283–335; sequence DEMEEWSASEANLFEEALEKYGKDFTDIQQDFLPWKSLTSIIEYYYMWKTTDR. Residue Ser386 is modified to Phosphoserine. Residues 393–420 form a GATA-type; atypical zinc finger; it reads CESCYTTQSYQWYSWGPPNMQCRLCASC. The interval 437-460 is disordered; it reads DGERPGPNRNNMSPHGIPARSSGS. Ser449 is subject to Phosphoserine. A Glycyl lysine isopeptide (Lys-Gly) (interchain with G-Cter in SUMO2 and SUMO3) cross-link involves residue Lys509. Phosphoserine is present on Ser522. Residues 542–552 show a composition bias toward basic and acidic residues; it reads ETHPRPPKPDP. The disordered stretch occupies residues 542–583; the sequence is ETHPRPPKPDPVKSSSSVLSSLTPAKSAPVINNGSPTILGKR. The SH3-binding signature appears at 545–552; that stretch reads PRPPKPDP. Residue Lys549 forms a Glycyl lysine isopeptide (Lys-Gly) (interchain with G-Cter in SUMO2) linkage. The span at 553–565 shows a compositional bias: low complexity; sequence VKSSSSVLSSLTP. Thr564 bears the Phosphothreonine mark. Residue Ser576 is modified to Phosphoserine. Phosphothreonine is present on Thr578. Lys614 is subject to N6-acetyllysine; alternate. Lys614 is covalently cross-linked (Glycyl lysine isopeptide (Lys-Gly) (interchain with G-Cter in ubiquitin); alternate). Ser627 carries the post-translational modification Phosphoserine. The interaction with RBBP4 stretch occupies residues 644-674; that stretch reads DVFYMATEETRKIRKLLSSSETKRAARRPYK. Positions 661-703 are disordered; it reads SSSETKRAARRPYKPIALRQSQALPLRPPPPAPVNDEPIVIED. The SH3-binding motif lies at 684 to 693; sequence LPLRPPPPAP. Positions 699-703 match the SUMO interaction motif 1 (SIM); crucial for efficient sumoylation motif; sequence IVIED.

The protein belongs to the metastasis-associated protein family. In terms of assembly, component of the nucleosome remodeling and deacetylase (NuRD) repressor complex, composed of core proteins MTA1, MTA2, MTA3, RBBP4, RBBP7, HDAC1, HDAC2, MBD2, MBD3, and peripherally associated proteins CDK2AP1, CDK2AP2, GATAD2A, GATAD2B, CHD3, CHD4 and CHD5. The exact stoichiometry of the NuRD complex is unknown, and some subunits such as MBD2 and MBD3, GATAD2A and GATAD2B, and CHD3, CHD4 and CHD5 define mutually exclusive NuRD complexes. Interacts with RBBP4; the interaction is direct. Interacts with BMAL1. Interacts with CLOCK. Interacts with COP1. Interacts with CSNK1G2 in the cytoplasm. Interacts with EP300. Interacts with HDAC2. Interacts with ITGB3BP/CENPR. Interacts with MBD3L2. Interacts with MDM2. Interacts with NACC2. Interacts with p53/TP53. Interacts with PIAS1. Interacts with PIAS3. Interacts with PIAS4. Interacts with PWWP2A. Interacts with PWWP2B. Interacts with SENP1. Interacts with SENP2. Interacts with SIX3; facilitates the binding of SIX3 to the core DNA motif of SIX3 promoter. Interacts with SUMO1. Interacts with SUMO2. Interacts with TFCP2L1; which is indispensable for TFCP2L1-mediated self-renewal-promoting effect and endoderm-inhibiting action. Interacts with TFAP2C. Interacts with TPR. Interacts with UBE2I/UBC9. In terms of processing, phosphorylation by CSNK1G2/CK1 triggered by estrogen enhances corepression of estrogen receptor (ER). Acetylation is essential for its transcriptional coactivator activity. Post-translationally, sumoylation positively regulates its transcriptional corepressor activity but does not affect the protein stability. Sumoylated preferentially by SUMO2 or SUMO3 than SUMO1. Sumoylation is enhanced by PIAS1/3/4 and preferentially sumoylated by SUMO2 in the presence of PIAS1/3/4. Desumoylated by SENP1. In terms of processing, ubiquitinated by COP1, which leads to proteasomal degradation. Isoform 1 abundant in testis and expressed at low levels in brain, heart, lung, liver, and kidney. Isoform 2 abundant in adrenal gland, brain, colon, heart, liver, lung, muscle, prostate, stomach, testis, and thymus and expressed at low levels in duodenum, kidney, pancreas, parotid, and spleen.

The protein resides in the nucleus. It is found in the nucleus envelope. The protein localises to the cytoplasm. It localises to the cytoskeleton. Its subcellular location is the rough endoplasmic reticulum. The protein resides in the golgi apparatus. It is found in the zymogen granule. Functionally, transcriptional coregulator which can act as both a transcriptional corepressor and coactivator. Acts as a component of the histone deacetylase NuRD complex which participates in the remodeling of chromatin. In the NuRD complex, regulates transcription of its targets by modifying the acetylation status of the target chromatin and cofactor accessibility to the target DNA. In conjunction with other components of NuRD, acts as a transcriptional corepressor of BRCA1, ESR1, TFF1 and CDKN1A. Acts as a transcriptional coactivator of BCAS3, and SUMO2, independent of the NuRD complex. Stimulates the expression of WNT1 by inhibiting the expression of its transcriptional corepressor SIX3. Regulates p53-dependent and -independent DNA repair processes following genotoxic stress. Regulates the stability and function of p53/TP53 by inhibiting its ubiquitination by COP1 and MDM2 thereby regulating the p53-dependent DNA repair. Plays a role in the regulation of the circadian clock and is essential for the generation and maintenance of circadian rhythms under constant light and for normal entrainment of behavior to light-dark (LD) cycles. Positively regulates the CLOCK-BMAL1 heterodimer mediated transcriptional activation of its own transcription and the transcription of CRY1. Regulates deacetylation of BMAL1 by regulating SIRT1 expression, resulting in derepressing CRY1-mediated transcription repression. With TFCP2L1, promotes establishment and maintenance of pluripotency in embryonic stem cells (ESCs) and inhibits endoderm differentiation. The protein is Metastasis-associated protein MTA1 (Mta1) of Rattus norvegicus (Rat).